The chain runs to 332 residues: Ribosomal RNA small subunit methyltransferase C (332 aa).

Belongs to the methyltransferase superfamily. RsmC family. Monomer.

It localises to the cytoplasm. It carries out the reaction guanosine(1207) in 16S rRNA + S-adenosyl-L-methionine = N(2)-methylguanosine(1207) in 16S rRNA + S-adenosyl-L-homocysteine + H(+). In terms of biological role, specifically methylates the guanine in position 1207 of 16S rRNA in the 30S particle. The sequence is that of Ribosomal RNA small subunit methyltransferase C from Pseudomonas putida (strain ATCC 700007 / DSM 6899 / JCM 31910 / BCRC 17059 / LMG 24140 / F1).